The primary structure comprises 117 residues: Ribonuclease P protein component (117 aa).

It belongs to the RnpA family. Consists of a catalytic RNA component (M1 or rnpB) and a protein subunit.

It catalyses the reaction Endonucleolytic cleavage of RNA, removing 5'-extranucleotides from tRNA precursor.. In terms of biological role, RNaseP catalyzes the removal of the 5'-leader sequence from pre-tRNA to produce the mature 5'-terminus. It can also cleave other RNA substrates such as 4.5S RNA. The protein component plays an auxiliary but essential role in vivo by binding to the 5'-leader sequence and broadening the substrate specificity of the ribozyme. This is Ribonuclease P protein component from Thermotoga petrophila (strain ATCC BAA-488 / DSM 13995 / JCM 10881 / RKU-1).